A 433-amino-acid chain; its full sequence is Mblk-1-related factor 1 (433 aa).

The HTH psq-type 1 domain occupies 145–197; sequence NKSNILRRNYTVEDLTQAVEDIRQGKLGTRRASVVYGIPRSTLRNKIYKLEAE. Positions 173-193 form a DNA-binding region, H-T-H motif; sequence TRRASVVYGIPRSTLRNKIYK. Low complexity predominate over residues 235 to 254; sequence GNQSDSSSSSPHASMCPSSP. Disordered regions lie at residues 235 to 278 and 304 to 338; these read GNQS…SCSP and ANIS…PKRG. Over residues 304-319 the composition is skewed to polar residues; it reads ANISNVDTHTPTPISE. Basic and acidic residues predominate over residues 320–332; sequence KSQKMHGNEEWKR. One can recognise an HTH psq-type 2 domain in the interval 334–386; that stretch reads RPKRGQYRKYDKNALDEAVRSVRRGEMTVHRAGSFFGVPHSTLEYKVKERNLM. Positions 362–382 form a DNA-binding region, H-T-H motif; that stretch reads VHRAGSFFGVPHSTLEYKVKE. The interval 393 to 433 is disordered; the sequence is LYSHDSSTSEDGSQLVTSTISEKSDSSSHTSTPIPFPISLV. The segment covering 396 to 408 has biased composition (polar residues); that stretch reads HDSSTSEDGSQLV. Residues 409-424 are compositionally biased toward low complexity; that stretch reads TSTISEKSDSSSHTST.

As to expression, expressed in AIM, RIC, AIZ, ADF, ADL, ASK, AWA, AUA, AIN, RIH (or RIR) and RIF head neurons and, in PVP, PVQ and DVA (or DVC) tail neurons, some intestinal cells, somatic gonad and vulva.

The protein resides in the nucleus. Functionally, may act as transcription activator. Plays a role in neurogenesis by regulating neurite pruning between left and right AIM neurons and left and right RIF neurons during larval development. Regulates olfactory plasticity. This Caenorhabditis elegans protein is Mblk-1-related factor 1.